We begin with the raw amino-acid sequence, 142 residues long: Glia maturation factor beta (142 aa).

The residue at position 2 (serine 2) is an N-acetylserine. Residues 4-139 (SLVVCDVAED…TEEWLREKLG (136 aa)) enclose the ADF-H domain.

It belongs to the actin-binding proteins ADF family. GMF subfamily. In terms of processing, phosphorylated; stimulated by phorbol ester.

Functionally, this protein causes differentiation of brain cells, stimulation of neural regeneration, and inhibition of proliferation of tumor cells. The polypeptide is Glia maturation factor beta (Gmfb) (Mus musculus (Mouse)).